The sequence spans 99 residues: Aspartyl/glutamyl-tRNA(Asn/Gln) amidotransferase subunit C (99 aa).

This sequence belongs to the GatC family. As to quaternary structure, heterotrimer of A, B and C subunits.

It carries out the reaction L-glutamyl-tRNA(Gln) + L-glutamine + ATP + H2O = L-glutaminyl-tRNA(Gln) + L-glutamate + ADP + phosphate + H(+). The catalysed reaction is L-aspartyl-tRNA(Asn) + L-glutamine + ATP + H2O = L-asparaginyl-tRNA(Asn) + L-glutamate + ADP + phosphate + 2 H(+). Allows the formation of correctly charged Asn-tRNA(Asn) or Gln-tRNA(Gln) through the transamidation of misacylated Asp-tRNA(Asn) or Glu-tRNA(Gln) in organisms which lack either or both of asparaginyl-tRNA or glutaminyl-tRNA synthetases. The reaction takes place in the presence of glutamine and ATP through an activated phospho-Asp-tRNA(Asn) or phospho-Glu-tRNA(Gln). This is Aspartyl/glutamyl-tRNA(Asn/Gln) amidotransferase subunit C from Rhodococcus erythropolis (strain PR4 / NBRC 100887).